Reading from the N-terminus, the 265-residue chain is MAMPDFTMRQLLEAGVHFGHHTRRWNPAMAPYLFGVRNQVHIIDLQQTVPMLDRALKVVRDTVANGGRVLFVGTKRAAADHVAEAAQRCGQYYVNHRWLGGMLTNWKTITGSIKRLRQIDEMLSGDTAGLTKKEVLDITRDREKLERSLGGIKEMGGLPDLLFVIDTNKEKLAIEEATKLGIPVIGVLDSNSNPAGVTYPIPGNDDAIRAITLYCDLVSGAVLDGISAELAASGQDIGAAEELPAETAVLEAAAAEGAEAPASAG.

It belongs to the universal ribosomal protein uS2 family.

The protein is Small ribosomal subunit protein uS2 of Gluconobacter oxydans (strain 621H) (Gluconobacter suboxydans).